The sequence spans 162 residues: Large ribosomal subunit protein uL15 (162 aa).

Residues 1 to 18 (MKLNEIRDNEGATKDRMR) are compositionally biased toward basic and acidic residues. The segment at 1–42 (MKLNEIRDNEGATKDRMRVGRGIGSGKGKTAGRGVKGQKART) is disordered. The span at 21–35 (RGIGSGKGKTAGRGV) shows a compositional bias: gly residues.

The protein belongs to the universal ribosomal protein uL15 family. As to quaternary structure, part of the 50S ribosomal subunit.

Binds to the 23S rRNA. This Methylobacterium sp. (strain 4-46) protein is Large ribosomal subunit protein uL15.